The following is a 182-amino-acid chain: Bifunctional protein PyrR (182 aa).

Residues 99 to 111 carry the PRPP-binding motif; it reads IVLVDDVLFTGRT.

This sequence belongs to the purine/pyrimidine phosphoribosyltransferase family. PyrR subfamily. As to quaternary structure, homodimer and homohexamer; in equilibrium.

The catalysed reaction is UMP + diphosphate = 5-phospho-alpha-D-ribose 1-diphosphate + uracil. Its function is as follows. Regulates transcriptional attenuation of the pyrimidine nucleotide (pyr) operon by binding in a uridine-dependent manner to specific sites on pyr mRNA. This disrupts an antiterminator hairpin in the RNA and favors formation of a downstream transcription terminator, leading to a reduced expression of downstream genes. Also displays a weak uracil phosphoribosyltransferase activity which is not physiologically significant. This chain is Bifunctional protein PyrR, found in Caldicellulosiruptor bescii (strain ATCC BAA-1888 / DSM 6725 / KCTC 15123 / Z-1320) (Anaerocellum thermophilum).